Consider the following 391-residue polypeptide: uncharacterized protein (391 aa).

An N-terminal signal peptide occupies residues 1–20 (MRKLFLLSILMIGVIVAFAG). C21 is lipidated: S-archaeol cysteine. The Fe/B12 periplasmic-binding domain occupies 104 to 377 (RIVTDFYCPI…DFAKMIHPEL (274 aa)).

The protein resides in the cell membrane. This is an uncharacterized protein from Methanocaldococcus jannaschii (strain ATCC 43067 / DSM 2661 / JAL-1 / JCM 10045 / NBRC 100440) (Methanococcus jannaschii).